The primary structure comprises 127 residues: Large ribosomal subunit protein bL17 (127 aa).

This sequence belongs to the bacterial ribosomal protein bL17 family. Part of the 50S ribosomal subunit. Contacts protein L32.

The sequence is that of Large ribosomal subunit protein bL17 from Chromohalobacter salexigens (strain ATCC BAA-138 / DSM 3043 / CIP 106854 / NCIMB 13768 / 1H11).